Consider the following 120-residue polypeptide: Small ribosomal subunit protein uS17m (120 aa).

The transit peptide at 1–20 (MSIVRSSVHAKWVVGKVIGT) directs the protein to the mitochondrion.

The protein belongs to the universal ribosomal protein uS17 family. Component of the mitochondrial ribosome small subunit (28S) which comprises a 12S rRNA and about 30 distinct proteins.

The protein resides in the mitochondrion. The sequence is that of Small ribosomal subunit protein uS17m (Mrps17) from Mus musculus (Mouse).